Here is a 494-residue protein sequence, read N- to C-terminus: UPF0371 protein SP70585_0405 (494 aa).

This sequence belongs to the UPF0371 family.

The polypeptide is UPF0371 protein SP70585_0405 (Streptococcus pneumoniae (strain 70585)).